Here is a 264-residue protein sequence, read N- to C-terminus: S-adenosylmethionine decarboxylase proenzyme (264 aa).

The Schiff-base intermediate with substrate; via pyruvic acid role is filled by serine 112. Pyruvic acid (Ser); by autocatalysis is present on serine 112. The Proton acceptor; for processing activity role is filled by histidine 117. Cysteine 140 acts as the Proton donor; for catalytic activity in catalysis.

The protein belongs to the prokaryotic AdoMetDC family. Type 2 subfamily. In terms of assembly, heterooctamer of four alpha and four beta chains arranged as a tetramer of alpha/beta heterodimers. Pyruvate serves as cofactor. Post-translationally, is synthesized initially as an inactive proenzyme. Formation of the active enzyme involves a self-maturation process in which the active site pyruvoyl group is generated from an internal serine residue via an autocatalytic post-translational modification. Two non-identical subunits are generated from the proenzyme in this reaction, and the pyruvate is formed at the N-terminus of the alpha chain, which is derived from the carboxyl end of the proenzyme. The post-translation cleavage follows an unusual pathway, termed non-hydrolytic serinolysis, in which the side chain hydroxyl group of the serine supplies its oxygen atom to form the C-terminus of the beta chain, while the remainder of the serine residue undergoes an oxidative deamination to produce ammonia and the pyruvoyl group blocking the N-terminus of the alpha chain.

It catalyses the reaction S-adenosyl-L-methionine + H(+) = S-adenosyl 3-(methylsulfanyl)propylamine + CO2. It participates in amine and polyamine biosynthesis; S-adenosylmethioninamine biosynthesis; S-adenosylmethioninamine from S-adenosyl-L-methionine: step 1/1. Functionally, catalyzes the decarboxylation of S-adenosylmethionine to S-adenosylmethioninamine (dcAdoMet), the propylamine donor required for the synthesis of the polyamines spermine and spermidine from the diamine putrescine. The chain is S-adenosylmethionine decarboxylase proenzyme from Yersinia pseudotuberculosis serotype I (strain IP32953).